Consider the following 817-residue polypeptide: Protein hunchback (817 aa).

3 disordered regions span residues 51 to 77, 93 to 132, and 187 to 252; these read PGTINPHHQHPQQHSSMMASQPQHSPL, HNGGGAHHLQFSDNSGAMTPSPNTNVGGQDFGFESNTSSA, and YSQQ…EDQD. Over residues 62 to 76 the composition is skewed to low complexity; sequence QQHSSMMASQPQHSP. A compositionally biased stretch (polar residues) spans 103 to 119; it reads FSDNSGAMTPSPNTNVG. Residues 189–201 are compositionally biased toward low complexity; that stretch reads QQQQQQQQRQLQQ. 4 consecutive C2H2-type zinc fingers follow at residues 287-309, 316-338, 344-366, and 372-396; these read HKCKSCGMVAITKMAFWEHARTH, LQCPKCPFVTELKHHLEYHIRKH, FQCDKCSYSCVNKSMLNSHRKSH, and YRCADCDYATKYCHSFKLHLRKYEH. Disordered regions lie at residues 456–477, 491–513, 564–619, and 666–758; these read PLQQQQQPQQPASPAKSSSSVA, QNLAQQQQQQQQSPGAQSHSSQQ, QLQQ…QQTP, and APTS…AGNS. Over residues 564-576 the composition is skewed to low complexity; the sequence is QLQQQQQNKQANE. Positions 577 to 595 are enriched in acidic residues; the sequence is NGEEDEEDNDEVDEDEEEF. Over residues 680-694 the composition is skewed to polar residues; the sequence is MPPTTSSPIHPSQVN. Over residues 721 to 758 the composition is skewed to low complexity; it reads PTTANTSASSTASSSGNSSNSSSTSTSSNSNSSSAGNS. 2 C2H2-type zinc fingers span residues 764-786 and 792-816; these read YECKYCDIFFKDAVLYTIHMGYH and FKCNMCGEKCDGPVGLFVHMARNAH.

It belongs to the hunchback C2H2-type zinc-finger protein family.

It is found in the nucleus. Its function is as follows. Gap class segmentation protein that controls development of head structures. This Musca domestica (House fly) protein is Protein hunchback (hb).